The chain runs to 490 residues: ATP synthase subunit beta, chloroplastic (490 aa).

Position 170-177 (170-177 (GGAGVGKT)) interacts with ATP.

It belongs to the ATPase alpha/beta chains family. In terms of assembly, F-type ATPases have 2 components, CF(1) - the catalytic core - and CF(0) - the membrane proton channel. CF(1) has five subunits: alpha(3), beta(3), gamma(1), delta(1), epsilon(1). CF(0) has four main subunits: a(1), b(1), b'(1) and c(9-12).

The protein resides in the plastid. The protein localises to the chloroplast thylakoid membrane. It carries out the reaction ATP + H2O + 4 H(+)(in) = ADP + phosphate + 5 H(+)(out). Its function is as follows. Produces ATP from ADP in the presence of a proton gradient across the membrane. The catalytic sites are hosted primarily by the beta subunits. The polypeptide is ATP synthase subunit beta, chloroplastic (Ipomoea aquatica (Water spinach)).